A 174-amino-acid polypeptide reads, in one-letter code: Non-classical export protein 2 homolog 1 (174 aa).

The Cytoplasmic portion of the chain corresponds to 1–7 (MLSAADN). The helical transmembrane segment at 8–28 (LVRIINAVFLIISIGLISGLI) threads the bilayer. The Extracellular segment spans residues 29–41 (GTQTKHSSRVNFC). Residues 42-62 (MFAAVYGLVTDSLYGFLANFW) form a helical membrane-spanning segment. The Cytoplasmic portion of the chain corresponds to 63–69 (TSLTYPA). Residues 70–90 (ILLVLDFLNFIFTFVAATALA) traverse the membrane as a helical segment. Topologically, residues 91-122 (VGIRCHSCKNKTYLEQNKIIQGSSSRCHQSQA) are extracellular. Residues 123 to 143 (AVAFFYFSCFLFLIKVTVATM) traverse the membrane as a helical segment. Topologically, residues 144-174 (GMMQNGGFGSNTGFSRRRARRQMGIPTISQV) are cytoplasmic.

The protein belongs to the NCE102 family.

The protein resides in the cell membrane. Its function is as follows. Involved in membrane organization. Required for the formation of membrane compartments of CAN1 (MCCs), localization of CAN1 at the MCCs and subsequent invagination of the plasma membrane at the MCCs sites. Involved in eisosome organization and might act as a sensor of sphingolipids that regulates plasma membrane function. Involved in a novel pathway of export of proteins that lack a cleavable signal sequence. Non-classical export pathway also functions as an alternative clearance/detoxification pathway to eliminate damaged material, when the basic repair pathway is not sufficient. This chain is Non-classical export protein 2 homolog 1 (FHN1), found in Saccharomyces cerevisiae (strain ATCC 204508 / S288c) (Baker's yeast).